The following is a 145-amino-acid chain: Protein SprT-like (145 aa).

The 136-residue stretch at D5–I140 folds into the SprT-like domain. H64 serves as a coordination point for Zn(2+). Residue E65 is part of the active site. H68 is a binding site for Zn(2+).

It belongs to the SprT family. Zn(2+) is required as a cofactor.

It localises to the cytoplasm. This is Protein SprT-like from Streptococcus equi subsp. equi (strain 4047).